Reading from the N-terminus, the 1443-residue chain is DNA polymerase III PolC-type (1443 aa).

The Exonuclease domain maps to 408–567; it reads FVIFDIETTG…YDTQALKKVF (160 aa).

It belongs to the DNA polymerase type-C family. PolC subfamily.

The protein localises to the cytoplasm. It carries out the reaction DNA(n) + a 2'-deoxyribonucleoside 5'-triphosphate = DNA(n+1) + diphosphate. Its function is as follows. Required for replicative DNA synthesis. This DNA polymerase also exhibits 3' to 5' exonuclease activity. The sequence is that of DNA polymerase III PolC-type from Mycoplasma pneumoniae (strain ATCC 29342 / M129 / Subtype 1) (Mycoplasmoides pneumoniae).